Reading from the N-terminus, the 155-residue chain is uncharacterized protein (155 aa).

Positions 1 to 14 (MLTLSGWITTQVPP) are enriched in polar residues. Positions 1-44 (MLTLSGWITTQVPPSSRAAADAKAARTGTAEQAEDPAAGTDAAD) are disordered. Residues 17 to 30 (RAAADAKAARTGTA) are compositionally biased toward low complexity.

This is an uncharacterized protein from Pseudomonas aeruginosa (strain ATCC 15692 / DSM 22644 / CIP 104116 / JCM 14847 / LMG 12228 / 1C / PRS 101 / PAO1).